The primary structure comprises 213 residues: Thymidylate kinase (213 aa).

ATP is bound at residue 10-17; that stretch reads GLEGAGKT.

The protein belongs to the thymidylate kinase family.

It catalyses the reaction dTMP + ATP = dTDP + ADP. Functionally, phosphorylation of dTMP to form dTDP in both de novo and salvage pathways of dTTP synthesis. The sequence is that of Thymidylate kinase from Escherichia coli O157:H7 (strain EC4115 / EHEC).